The sequence spans 505 residues: Tyrosine-protein kinase isoform SRK1 (505 aa).

2 stretches are compositionally biased toward polar residues: residues 1–10 (MGSCCSSQDG) and 18–31 (AGST…SQSV). Residues 1 to 53 (MGSCCSSQDGDGNGKATAGSTVDSHELSQSVKGKIKQPEPKPKPPPQVPPAQD) form a disordered region. One can recognise an SH3 domain in the interval 54–116 (VKYPIYVGKY…PSNYVAEYKS (63 aa)). The 93-residue stretch at 122–214 (WFLGKIKRVE…GLCCKLLYPC (93 aa)) folds into the SH2 domain. The Protein kinase domain occupies 240–493 (IKLLRRLGAG…TLQWQLEEFF (254 aa)). ATP contacts are provided by residues 246 to 254 (LGAGQFGEV) and K268. D359 (proton acceptor) is an active-site residue.

The protein belongs to the protein kinase superfamily. Tyr protein kinase family. SRC subfamily.

The protein resides in the cytoplasm. The enzyme catalyses L-tyrosyl-[protein] + ATP = O-phospho-L-tyrosyl-[protein] + ADP + H(+). This is Tyrosine-protein kinase isoform SRK1 (SRK1) from Spongilla lacustris (Freshwater sponge).